The primary structure comprises 217 residues: MRMRHKPWANDFLAENADIAISDPAQYKGRWNTVFGNDNPIHIEVGTGKGQFISGMAKQNPDINYIGIELFKSVIVTAVQKVKDSGAHNVRLLNIDAETLNDVFERGEIKRVYLNFSDPWPKNRHEKRRLTFKTFLKKYEEVMGETGEIHFKTDNRGLFEYSLKSFSEYGLLLTEVSLDLHNSDPKGNIMTEYEEKFSALGQPIYRAEVEWRTKDRL.

Residues Glu44, Glu69, Asp96, and Asp118 each coordinate S-adenosyl-L-methionine. The active site involves Asp118. Position 122 (Lys122) interacts with substrate. Residues Arg124–Arg129 are interaction with RNA. Substrate-binding positions include Asp154 and Thr191–Glu194.

The protein belongs to the class I-like SAM-binding methyltransferase superfamily. TrmB family.

It carries out the reaction guanosine(46) in tRNA + S-adenosyl-L-methionine = N(7)-methylguanosine(46) in tRNA + S-adenosyl-L-homocysteine. Its pathway is tRNA modification; N(7)-methylguanine-tRNA biosynthesis. Catalyzes the formation of N(7)-methylguanine at position 46 (m7G46) in tRNA. The protein is tRNA (guanine-N(7)-)-methyltransferase of Bacillus velezensis (strain DSM 23117 / BGSC 10A6 / LMG 26770 / FZB42) (Bacillus amyloliquefaciens subsp. plantarum).